A 119-amino-acid chain; its full sequence is MQNKIQVKSVEKRENALIFCAENSEIEVKGLSARNHVLVDSDNLSFLYILENESSFIYVSIPHTCWEAMNNDVVMFVRVNDIEMELEGLKEEVEYLVENIEGNANYGEELVTAVEKVFL.

This sequence belongs to the UPF0738 family.

The chain is UPF0738 protein BAA_1286 from Bacillus anthracis (strain A0248).